The primary structure comprises 350 residues: Guanine nucleotide-binding protein G(t) subunit alpha (350 aa).

Residues 1–21 (MGAGASAEEKHSRELEKKLKE) form a disordered region. The N-myristoyl glycine moiety is linked to residue G2. Over residues 7–21 (AEEKHSRELEKKLKE) the composition is skewed to basic and acidic residues. In terms of domain architecture, G-alpha spans 28-350 (RTVKLLLLGA…KENLKDCGLF (323 aa)). The interval 31-44 (KLLLLGAGESGKST) is G1 motif. Residues 36 to 43 (GAGESGKS), 171 to 177 (LRSRVKT), 196 to 200 (DVGGQ), 265 to 268 (NKKD), and A322 each bind GTP. Residues S43 and T177 each coordinate Mg(2+). The segment at 169–177 (DVLRSRVKT) is G2 motif. The segment at 192-201 (FRMFDVGGQR) is G3 motif. Residues 261–268 (VLFLNKKD) form a G4 motif region. The segment at 320–325 (TCATDT) is G5 motif.

Belongs to the G-alpha family. G(i/o/t/z) subfamily. G proteins are composed of 3 units; alpha, beta and gamma. The alpha chain contains the guanine nucleotide binding site.

Functionally, guanine nucleotide-binding proteins (G proteins) are involved as modulators or transducers in various transmembrane signaling systems. Transducin is an amplifier and one of the transducers of a visual impulse that performs the coupling between rhodopsin and cGMP-phosphodiesterase. The polypeptide is Guanine nucleotide-binding protein G(t) subunit alpha (gnat) (Xenopus laevis (African clawed frog)).